We begin with the raw amino-acid sequence, 124 residues long: Large ribosomal subunit protein bL12 (124 aa).

Belongs to the bacterial ribosomal protein bL12 family. Homodimer. Part of the ribosomal stalk of the 50S ribosomal subunit. Forms a multimeric L10(L12)X complex, where L10 forms an elongated spine to which 2 to 4 L12 dimers bind in a sequential fashion. Binds GTP-bound translation factors.

Forms part of the ribosomal stalk which helps the ribosome interact with GTP-bound translation factors. Is thus essential for accurate translation. This is Large ribosomal subunit protein bL12 from Dehalococcoides mccartyi (strain ATCC BAA-2266 / KCTC 15142 / 195) (Dehalococcoides ethenogenes (strain 195)).